A 603-amino-acid chain; its full sequence is Aspartate--tRNA(Asp/Asn) ligase (603 aa).

The segment at 205–208 (QLFK) is aspartate. R227 serves as a coordination point for L-aspartate. Residues 227–229 (RDE) and Q236 contribute to the ATP site. H463 lines the L-aspartate pocket. E497 contacts ATP. R504 contacts L-aspartate. 549–552 (GMDR) is a binding site for ATP.

Belongs to the class-II aminoacyl-tRNA synthetase family. Type 1 subfamily. As to quaternary structure, homodimer.

It is found in the cytoplasm. It carries out the reaction tRNA(Asx) + L-aspartate + ATP = L-aspartyl-tRNA(Asx) + AMP + diphosphate. In terms of biological role, aspartyl-tRNA synthetase with relaxed tRNA specificity since it is able to aspartylate not only its cognate tRNA(Asp) but also tRNA(Asn). Reaction proceeds in two steps: L-aspartate is first activated by ATP to form Asp-AMP and then transferred to the acceptor end of tRNA(Asp/Asn). In Anaeromyxobacter dehalogenans (strain 2CP-C), this protein is Aspartate--tRNA(Asp/Asn) ligase.